The following is a 442-amino-acid chain: Glutamate--tRNA ligase 1 (442 aa).

Residues 9 to 19 carry the 'HIGH' region motif; the sequence is PSPTGKLHVGN. The short motif at 240–244 is the 'KMSKS' region element; it reads KLSKR. ATP is bound at residue K243.

The protein belongs to the class-I aminoacyl-tRNA synthetase family. Glutamate--tRNA ligase type 1 subfamily. In terms of assembly, monomer.

Its subcellular location is the cytoplasm. It catalyses the reaction tRNA(Glu) + L-glutamate + ATP = L-glutamyl-tRNA(Glu) + AMP + diphosphate. Catalyzes the attachment of glutamate to tRNA(Glu) in a two-step reaction: glutamate is first activated by ATP to form Glu-AMP and then transferred to the acceptor end of tRNA(Glu). The protein is Glutamate--tRNA ligase 1 of Novosphingobium aromaticivorans (strain ATCC 700278 / DSM 12444 / CCUG 56034 / CIP 105152 / NBRC 16084 / F199).